The primary structure comprises 341 residues: MKEFDYDKLVTAIDRFSPSKLIGKGSHGYVYKALLHHQDVDETRQRVVAIKTPSSLSPSSPSSSSSSKSEQTKKLENEIDVMSSLPYHPHVLSFLGHAEKKLMVVEYMPNESLYQLLHVSTDPLPTWLKRIEIALQIASAVHFLHEHGIIHRDIKSENILFDSNWEAKLADFGLAVDFGGDKKIRPAPAGTIGYLDPCYTLPENLSMKTDVYSYGVVLLEIVSCRKAIDVSRSPASIVDWAVPLIKEGRIGEICGGGGGGSGVFRGMSLRLLRMAARCVSSDVESRPCFGEITAEIVACLAEPLKSLPLWMSVLRRVVKLKRRKKRLRETLTWPGQTCRVW.

Positions 16 to 298 (FSPSKLIGKG…FGEITAEIVA (283 aa)) constitute a Protein kinase domain. Residues 22–30 (IGKGSHGYV) and K51 each bind ATP. Positions 52 to 75 (TPSSLSPSSPSSSSSSKSEQTKKL) are disordered. Residues 53–69 (PSSLSPSSPSSSSSSKS) show a composition bias toward low complexity. Residue D153 is the Proton acceptor of the active site. Residues 311-332 (MSVLRRVVKLKRRKKRLRETLT) are a coiled coil.

This sequence belongs to the protein kinase superfamily. Ser/Thr protein kinase family. As to expression, ubiquitous. Higher expression in mature stamina and pollen.

The enzyme catalyses L-seryl-[protein] + ATP = O-phospho-L-seryl-[protein] + ADP + H(+). It carries out the reaction L-threonyl-[protein] + ATP = O-phospho-L-threonyl-[protein] + ADP + H(+). The protein is Serine/threonine-protein kinase-like protein At5g23170 of Arabidopsis thaliana (Mouse-ear cress).